The chain runs to 219 residues: Cytidylate kinase (219 aa).

Residue 21-29 (GPAASGKGT) coordinates ATP.

This sequence belongs to the cytidylate kinase family. Type 1 subfamily.

The protein localises to the cytoplasm. The catalysed reaction is CMP + ATP = CDP + ADP. It carries out the reaction dCMP + ATP = dCDP + ADP. The chain is Cytidylate kinase from Rickettsia prowazekii (strain Madrid E).